A 371-amino-acid polypeptide reads, in one-letter code: UDP-N-acetylglucosamine--N-acetylmuramyl-(pentapeptide) pyrophosphoryl-undecaprenol N-acetylglucosamine transferase (371 aa).

Residues 15-17 (TGG), Asn-126, Arg-172, Ser-199, Ile-256, 275-280 (ALTVSE), and Gln-301 each bind UDP-N-acetyl-alpha-D-glucosamine.

Belongs to the glycosyltransferase 28 family. MurG subfamily.

The protein resides in the cell inner membrane. It carries out the reaction di-trans,octa-cis-undecaprenyl diphospho-N-acetyl-alpha-D-muramoyl-L-alanyl-D-glutamyl-meso-2,6-diaminopimeloyl-D-alanyl-D-alanine + UDP-N-acetyl-alpha-D-glucosamine = di-trans,octa-cis-undecaprenyl diphospho-[N-acetyl-alpha-D-glucosaminyl-(1-&gt;4)]-N-acetyl-alpha-D-muramoyl-L-alanyl-D-glutamyl-meso-2,6-diaminopimeloyl-D-alanyl-D-alanine + UDP + H(+). It participates in cell wall biogenesis; peptidoglycan biosynthesis. In terms of biological role, cell wall formation. Catalyzes the transfer of a GlcNAc subunit on undecaprenyl-pyrophosphoryl-MurNAc-pentapeptide (lipid intermediate I) to form undecaprenyl-pyrophosphoryl-MurNAc-(pentapeptide)GlcNAc (lipid intermediate II). The polypeptide is UDP-N-acetylglucosamine--N-acetylmuramyl-(pentapeptide) pyrophosphoryl-undecaprenol N-acetylglucosamine transferase (Francisella tularensis subsp. tularensis (strain WY96-3418)).